The primary structure comprises 204 residues: Proteasome subunit beta type-3 (204 aa).

Belongs to the peptidase T1B family. In terms of assembly, the 26S proteasome consists of a 20S proteasome core and two 19S regulatory subunits. The 20S proteasome core is composed of 28 subunits that are arranged in four stacked rings, resulting in a barrel-shaped structure. The two end rings are each formed by seven alpha subunits, and the two central rings are each formed by seven beta subunits. The catalytic chamber with the active sites is on the inside of the barrel.

The protein resides in the cytoplasm. Its subcellular location is the nucleus. Functionally, non-catalytic component of the proteasome, a multicatalytic proteinase complex which is characterized by its ability to cleave peptides with Arg, Phe, Tyr, Leu, and Glu adjacent to the leaving group at neutral or slightly basic pH. The proteasome has an ATP-dependent proteolytic activity. The chain is Proteasome subunit beta type-3 (PBC1) from Oryza sativa subsp. japonica (Rice).